Reading from the N-terminus, the 64-residue chain is Conotoxin Ts-011 (64 aa).

The first 22 residues, 1 to 22 (MHCLPVPVILLLLIASTPSVDA), serve as a signal peptide directing secretion. Positions 23–51 (RPKTKDDVPPASFHGADNANRILRTLWNL) are excised as a propeptide. Ile63 carries the isoleucine amide modification.

It belongs to the conotoxin T superfamily. Post-translationally, contains 2 disulfide bonds that can be either 'C1-C3, C2-C4' or 'C1-C4, C2-C3', since these disulfide connectivities have been observed for conotoxins with cysteine framework V (for examples, see AC P0DQQ7 and AC P81755). As to expression, expressed by the venom duct.

The protein resides in the secreted. The protein is Conotoxin Ts-011 of Conus tessulatus (Tessellate cone).